Reading from the N-terminus, the 282-residue chain is NADPH-dependent 7-cyano-7-deazaguanine reductase (282 aa).

Ile82 to Ser84 is a substrate binding site. Residue Ser84–Lys85 coordinates NADPH. The active-site Thioimide intermediate is the Cys189. Asp196 (proton donor) is an active-site residue. A substrate-binding site is contributed by His228–Glu229. Arg257–Gly258 contributes to the NADPH binding site.

Belongs to the GTP cyclohydrolase I family. QueF type 2 subfamily. In terms of assembly, homodimer.

It localises to the cytoplasm. The catalysed reaction is 7-aminomethyl-7-carbaguanine + 2 NADP(+) = 7-cyano-7-deazaguanine + 2 NADPH + 3 H(+). Its pathway is tRNA modification; tRNA-queuosine biosynthesis. In terms of biological role, catalyzes the NADPH-dependent reduction of 7-cyano-7-deazaguanine (preQ0) to 7-aminomethyl-7-deazaguanine (preQ1). This is NADPH-dependent 7-cyano-7-deazaguanine reductase from Delftia acidovorans (strain DSM 14801 / SPH-1).